A 254-amino-acid polypeptide reads, in one-letter code: Demethylmenaquinone methyltransferase (254 aa).

S-adenosyl-L-methionine-binding positions include Thr62, Asp80, 122–123 (DG), and Ser139.

The protein belongs to the class I-like SAM-binding methyltransferase superfamily. MenG/UbiE family.

It carries out the reaction a 2-demethylmenaquinol + S-adenosyl-L-methionine = a menaquinol + S-adenosyl-L-homocysteine + H(+). The protein operates within quinol/quinone metabolism; menaquinone biosynthesis; menaquinol from 1,4-dihydroxy-2-naphthoate: step 2/2. Methyltransferase required for the conversion of demethylmenaquinol (DMKH2) to menaquinol (MKH2). This chain is Demethylmenaquinone methyltransferase, found in Parafrankia sp. (strain EAN1pec).